The following is an 81-amino-acid chain: Small ribosomal subunit protein bS20 (81 aa).

This sequence belongs to the bacterial ribosomal protein bS20 family.

Functionally, binds directly to 16S ribosomal RNA. This is Small ribosomal subunit protein bS20 from Mycoplasma capricolum subsp. capricolum (strain California kid / ATCC 27343 / NCTC 10154).